A 502-amino-acid chain; its full sequence is Protein IWS1 homolog 1 (502 aa).

Over residues 1–12 (MGFEDDPYRDVD) the composition is skewed to basic and acidic residues. 2 disordered regions span residues 1–61 (MGFE…DNDK) and 87–208 (DEDV…DEDE). Composition is skewed to acidic residues over residues 13–22 (GEPIVDFDDF), 34–49 (QDFDEDLADDIGDWDG), and 87–97 (DEDVDDAEFDE). Basic and acidic residues-rich tracts occupy residues 138 to 151 (NRGERKSEEIDEMW) and 181 to 194 (PSERYGGDAGDRSP). Position 185 is a phosphotyrosine (Tyr185). The TFIIS N-terminal domain maps to 287 to 370 (TLLKNWLEPL…DKWSRPIFNK (84 aa)). Residues 385 to 434 (VPYRRPPVKKPSNKATMESRDGDFDLEIRERKTGLTSGQSSRGDRQMTMR) form a disordered region. Over residues 401–417 (MESRDGDFDLEIRERKT) the composition is skewed to basic and acidic residues.

The protein belongs to the IWS1 family. As to quaternary structure, interacts with BZR2/BES1 and SPT6 (via N-terminus). Interacts with ASHH2/SDG8.

It localises to the nucleus. Functionally, transcription factor involved in RNA polymerase II (RNAPII) transcription regulation. Involved in transcription elongation. May function at post-recruitment and elongation steps of transcription. May be recruited by BZR2/BES1 to target genes and promote their expression during transcription elongation process. Required for brassinosteroid (BR)-induced gene expression. Required the for regulation of numerous nitrogen-responsive genes in roots. Acts in roots to repress NRT2.1 transcription in response to high nitrogen supply. This repression is associated with an IWS1-dependent increase of trimethylation on 'Lys-27' H3K27me3 at the NRT2.1 locus. The chain is Protein IWS1 homolog 1 from Arabidopsis thaliana (Mouse-ear cress).